The following is a 208-amino-acid chain: Ectodysplasin-A receptor-associated adapter protein (208 aa).

Positions 1-18 (MASPDDPLRSDHMAKEPV) are enriched in basic and acidic residues. The tract at residues 1–99 (MASPDDPLRS…KGSCSCPSCS (99 aa)) is disordered. Polar residues predominate over residues 49–61 (TVNSNCPPNSDDQ). The 80-residue stretch at 116–195 (DTIRIKLDPC…KILRRWVDEE (80 aa)) folds into the Death domain.

In terms of assembly, binds EDAR. Self-associates and binds TRAF1, TRAF2 and TRAF3.

It localises to the cytoplasm. Adapter protein that interacts with EDAR DEATH domain and couples the receptor to EDA signaling pathway during morphogenesis of ectodermal organs. Mediates the activation of NF-kappa-B. This chain is Ectodysplasin-A receptor-associated adapter protein (Edaradd), found in Mus musculus (Mouse).